The chain runs to 445 residues: Probable D-serine dehydratase (445 aa).

Lysine 111 carries the post-translational modification N6-(pyridoxal phosphate)lysine.

This sequence belongs to the serine/threonine dehydratase family. DsdA subfamily. Pyridoxal 5'-phosphate is required as a cofactor.

The enzyme catalyses D-serine = pyruvate + NH4(+). The polypeptide is Probable D-serine dehydratase (Burkholderia pseudomallei (strain 1710b)).